Here is a 313-residue protein sequence, read N- to C-terminus: D-apiose import binding protein (313 aa).

The signal sequence occupies residues 1–26 (MKLTRRLTLAAFASALALGTAMPAFA). D-apiofuranose contacts are provided by residues asparagine 39, 115–116 (DR), 162–164 (DTN), arginine 168, asparagine 218, aspartate 243, and glutamine 263.

This sequence belongs to the bacterial solute-binding protein 2 family.

Its subcellular location is the periplasm. Part of an ABC transporter complex involved in D-apiose import. Binds D-apiose, D-ribose and D-ribulose. This chain is D-apiose import binding protein, found in Rhizobium etli (strain ATCC 51251 / DSM 11541 / JCM 21823 / NBRC 15573 / CFN 42).